The chain runs to 67 residues: Prokaryotic ubiquitin-like protein Pup (67 aa).

The segment covering 1-13 (MAGQEQQQPQSRD) has biased composition (low complexity). Residues 1-48 (MAGQEQQQPQSRDSQVDEDIPEAPPAPPEAQASASTEGVDDLLDEIDG) form a disordered region. Residues 25 to 61 (PAPPEAQASASTEGVDDLLDEIDGVLESNAEEFVRAF) form an ARC ATPase binding region. Residues 38–48 (GVDDLLDEIDG) are compositionally biased toward acidic residues. Q67 bears the Deamidated glutamine mark. An Isoglutamyl lysine isopeptide (Gln-Lys) (interchain with K-? in acceptor proteins) cross-link involves residue Q67.

This sequence belongs to the prokaryotic ubiquitin-like protein family. As to quaternary structure, strongly interacts with the proteasome-associated ATPase ARC through a hydrophobic interface; the interacting region of Pup lies in its C-terminal half. There is one Pup binding site per ARC hexamer ring. Post-translationally, is modified by deamidation of its C-terminal glutamine to glutamate by the deamidase Dop, a prerequisite to the subsequent pupylation process.

Its pathway is protein degradation; proteasomal Pup-dependent pathway. In terms of biological role, protein modifier that is covalently attached to lysine residues of substrate proteins, thereby targeting them for proteasomal degradation. The tagging system is termed pupylation. In Pseudarthrobacter chlorophenolicus (strain ATCC 700700 / DSM 12829 / CIP 107037 / JCM 12360 / KCTC 9906 / NCIMB 13794 / A6) (Arthrobacter chlorophenolicus), this protein is Prokaryotic ubiquitin-like protein Pup.